The sequence spans 379 residues: Cobalt-precorrin-5B C(1)-methyltransferase (379 aa).

It belongs to the CbiD family.

The catalysed reaction is Co-precorrin-5B + S-adenosyl-L-methionine = Co-precorrin-6A + S-adenosyl-L-homocysteine. It functions in the pathway cofactor biosynthesis; adenosylcobalamin biosynthesis; cob(II)yrinate a,c-diamide from sirohydrochlorin (anaerobic route): step 6/10. Functionally, catalyzes the methylation of C-1 in cobalt-precorrin-5B to form cobalt-precorrin-6A. This is Cobalt-precorrin-5B C(1)-methyltransferase from Salmonella paratyphi A (strain ATCC 9150 / SARB42).